Here is a 514-residue protein sequence, read N- to C-terminus: Multifunctional alkaline phosphatase superfamily protein pRL90232 (514 aa).

Mn(2+) is bound by residues D12, C57, D324, and H325. C57 functions as the Nucleophile in the catalytic mechanism. C57 is subject to 3-oxoalanine (Cys).

It belongs to the alkaline phosphatase superfamily. As to quaternary structure, homotetramer. Mn(2+) is required as a cofactor. The conversion to 3-oxoalanine (also known as C-formylglycine, FGly), of a serine or cysteine residue in prokaryotes and of a cysteine residue in eukaryotes, is critical for catalytic activity.

Hydrolytic enzyme with a broad substrate specificity acting on phosphate diesters and phosphonate monoesters. The sequence is that of Multifunctional alkaline phosphatase superfamily protein pRL90232 from Rhizobium johnstonii (strain DSM 114642 / LMG 32736 / 3841) (Rhizobium leguminosarum bv. viciae).